The sequence spans 500 residues: Probable cytosol aminopeptidase (500 aa).

The Mn(2+) site is built by Lys-264 and Asp-269. Lys-276 is a catalytic residue. Mn(2+)-binding residues include Asp-287, Asp-346, and Glu-348. The active site involves Arg-350.

This sequence belongs to the peptidase M17 family. The cofactor is Mn(2+).

The protein localises to the cytoplasm. It carries out the reaction Release of an N-terminal amino acid, Xaa-|-Yaa-, in which Xaa is preferably Leu, but may be other amino acids including Pro although not Arg or Lys, and Yaa may be Pro. Amino acid amides and methyl esters are also readily hydrolyzed, but rates on arylamides are exceedingly low.. It catalyses the reaction Release of an N-terminal amino acid, preferentially leucine, but not glutamic or aspartic acids.. In terms of biological role, presumably involved in the processing and regular turnover of intracellular proteins. Catalyzes the removal of unsubstituted N-terminal amino acids from various peptides. The chain is Probable cytosol aminopeptidase from Afipia carboxidovorans (strain ATCC 49405 / DSM 1227 / KCTC 32145 / OM5) (Oligotropha carboxidovorans).